Reading from the N-terminus, the 309-residue chain is Glutaminase (309 aa).

Residues serine 64, asparagine 114, glutamate 160, asparagine 167, tyrosine 191, tyrosine 243, and valine 261 each coordinate substrate.

The protein belongs to the glutaminase family. Homotetramer.

The enzyme catalyses L-glutamine + H2O = L-glutamate + NH4(+). The protein is Glutaminase of Rhizobium leguminosarum bv. trifolii (strain WSM2304).